The following is a 269-amino-acid chain: Neurotrophic factor BDNF precursor form (269 aa).

Residues M1–A18 form the signal peptide. The propeptide occupies A19–R150. Disordered regions lie at residues A39–L61 and A82–A104. N-linked (GlcNAc...) asparagine glycosylation is present at N143. 3 cysteine pairs are disulfide-bonded: C163–C230, C208–C259, and C218–C261.

The protein belongs to the NGF-beta family.

Functionally, BDNF promotes the survival of neuronal populations that are all located either in the central nervous system or directly connected to it. The polypeptide is Neurotrophic factor BDNF precursor form (bdnf) (Xiphophorus maculatus (Southern platyfish)).